The sequence spans 386 residues: Putative F-box/kelch-repeat protein At4g11750 (386 aa).

Positions 5–51 (PVDLPYIPDDLLLNCLARVSRLYYPILSLVSKRFRSLVASLELYEIR) constitute an F-box domain. Kelch repeat units lie at residues 187-236 (KIYV…VYDG), 238-285 (LYLF…YGRS), and 287-324 (VLMWYNTEERLWRYLKGLKKLPKLPKDCTCVRLLGYSG).

This is Putative F-box/kelch-repeat protein At4g11750 from Arabidopsis thaliana (Mouse-ear cress).